The following is a 138-amino-acid chain: Cystatin-11 (138 aa).

The signal sequence occupies residues 1–26 (MMAEPWQALQLLLAILLTLMALPYQA). Intrachain disulfides connect C94/C102 and C115/C135. A glycan (N-linked (GlcNAc...) asparagine) is linked at N132.

This sequence belongs to the cystatin family. As to expression, detected in the epithelium and lumen of the epididymis, and in sperm (at protein level).

The protein localises to the secreted. Its function is as follows. Has antibacterial activity against the Gram-negative bacteria E.coli. May play a role in sperm maturation and fertilization. This Homo sapiens (Human) protein is Cystatin-11 (CST11).